The primary structure comprises 549 residues: Undecaprenyl phosphate-alpha-4-amino-4-deoxy-L-arabinose arabinosyl transferase (549 aa).

Transmembrane regions (helical) follow at residues 9 to 29, 80 to 100, 112 to 132, 136 to 156, 176 to 196, 204 to 224, 256 to 276, 288 to 308, 312 to 332, 346 to 366, 376 to 396, and 402 to 422; these read LLLIAFGLFYLVPLSNHGLWI, LFGVRIASVVATALSVLLAYL, SLACALLYASFGLIAGQSGYA, PQFTFWVNLSLVALWYALDAG, FLTKGFLAWLLPVLVALPYML, LLGYGALAVLVALLVCLPWAL, PWWFYLPLLAVACLPWSGLLP, QPPVAFLALWLLLPLAFFSLS, LPTYIMPCLLPLALLMGHALV, NGLLNLGLALLALAALAYLQL, FELFLVLLVIGAWAAAGLAQW, and AWAAPLLASWVLIALLPAAMP.

It belongs to the glycosyltransferase 83 family.

It is found in the cell inner membrane. The catalysed reaction is 4-amino-4-deoxy-alpha-L-arabinopyranosyl di-trans,octa-cis-undecaprenyl phosphate + lipid IVA = lipid IIA + di-trans,octa-cis-undecaprenyl phosphate.. It functions in the pathway lipopolysaccharide metabolism; 4-amino-4-deoxy-beta-L-arabinose-lipid A biosynthesis. Catalyzes the transfer of the L-Ara4N moiety of the glycolipid undecaprenyl phosphate-alpha-L-Ara4N to lipid A. The modified arabinose is attached to lipid A and is required for resistance to polymyxin and cationic antimicrobial peptides. This chain is Undecaprenyl phosphate-alpha-4-amino-4-deoxy-L-arabinose arabinosyl transferase, found in Pseudomonas paraeruginosa (strain DSM 24068 / PA7) (Pseudomonas aeruginosa (strain PA7)).